Here is a 154-residue protein sequence, read N- to C-terminus: Large ribosomal subunit protein uL13 (154 aa).

This sequence belongs to the universal ribosomal protein uL13 family. Part of the 50S ribosomal subunit.

This protein is one of the early assembly proteins of the 50S ribosomal subunit, although it is not seen to bind rRNA by itself. It is important during the early stages of 50S assembly. The polypeptide is Large ribosomal subunit protein uL13 (Bartonella quintana (strain Toulouse) (Rochalimaea quintana)).